Consider the following 347-residue polypeptide: Dihydroorotase (347 aa).

Zn(2+)-binding residues include H13 and H15. Residues 15–17 (HLR) and N41 each bind substrate. Residues K99, H136, and H174 each coordinate Zn(2+). Position 99 is an N6-carboxylysine (K99). Residue H136 coordinates substrate. L219 contributes to the substrate binding site. D247 contacts Zn(2+). D247 is an active-site residue. Substrate-binding residues include H251 and A263.

It belongs to the metallo-dependent hydrolases superfamily. DHOase family. Class II DHOase subfamily. Homodimer. Requires Zn(2+) as cofactor.

It catalyses the reaction (S)-dihydroorotate + H2O = N-carbamoyl-L-aspartate + H(+). It participates in pyrimidine metabolism; UMP biosynthesis via de novo pathway; (S)-dihydroorotate from bicarbonate: step 3/3. Functionally, catalyzes the reversible cyclization of carbamoyl aspartate to dihydroorotate. This chain is Dihydroorotase, found in Sinorhizobium medicae (strain WSM419) (Ensifer medicae).